The following is a 188-amino-acid chain: dCTP deaminase (188 aa).

Residues 111–116 (KSTYAR), 135–137 (TLE), Gln156, Tyr170, and Gln180 contribute to the dCTP site. Residue Glu137 is the Proton donor/acceptor of the active site.

This sequence belongs to the dCTP deaminase family. As to quaternary structure, homotrimer.

The enzyme catalyses dCTP + H2O + H(+) = dUTP + NH4(+). It participates in pyrimidine metabolism; dUMP biosynthesis; dUMP from dCTP (dUTP route): step 1/2. Its function is as follows. Catalyzes the deamination of dCTP to dUTP. The polypeptide is dCTP deaminase (Acidithiobacillus ferrooxidans (strain ATCC 23270 / DSM 14882 / CIP 104768 / NCIMB 8455) (Ferrobacillus ferrooxidans (strain ATCC 23270))).